The sequence spans 209 residues: Ribosomal RNA large subunit methyltransferase E (209 aa).

S-adenosyl-L-methionine-binding residues include glycine 63, tryptophan 65, aspartate 83, aspartate 99, and aspartate 124. Lysine 164 serves as the catalytic Proton acceptor.

It belongs to the class I-like SAM-binding methyltransferase superfamily. RNA methyltransferase RlmE family.

Its subcellular location is the cytoplasm. The catalysed reaction is uridine(2552) in 23S rRNA + S-adenosyl-L-methionine = 2'-O-methyluridine(2552) in 23S rRNA + S-adenosyl-L-homocysteine + H(+). Functionally, specifically methylates the uridine in position 2552 of 23S rRNA at the 2'-O position of the ribose in the fully assembled 50S ribosomal subunit. In Shewanella loihica (strain ATCC BAA-1088 / PV-4), this protein is Ribosomal RNA large subunit methyltransferase E.